The primary structure comprises 260 residues: Serine/threonine-protein acetyltransferase NGR_a02610 (260 aa).

Catalysis depends on residues His123 and Glu143. His123 lines the CoA pocket. 180-181 is a CoA binding site; that stretch reads KS. Cys185 is a catalytic residue.

It belongs to the acetyltransferase YopJ family.

It carries out the reaction L-threonyl-[protein] + acetyl-CoA = O-acetyl-L-threonyl-[protein] + CoA. The catalysed reaction is L-seryl-[protein] + acetyl-CoA = O-acetyl-L-seryl-[protein] + CoA. Serine/threonine-protein acetyltransferase translocated into infected cells, which mediates acetylation of serine and threonine residues of host target proteins. The chain is Serine/threonine-protein acetyltransferase NGR_a02610 from Sinorhizobium fredii (strain NBRC 101917 / NGR234).